The chain runs to 288 residues: THO complex subunit 4D (288 aa).

The segment at M1–P55 is disordered. S2 carries the post-translational modification N-acetylserine. An RRM domain is found at T93 to G170. The disordered stretch occupies residues Q201–S288. Over residues Q232–G260 the composition is skewed to gly residues. The span at K264–H281 shows a compositional bias: basic and acidic residues.

Belongs to the ALYREF family. In terms of assembly, interacts with PARP1. Interacts with EIF4A3.

It is found in the nucleus. The protein localises to the nucleoplasm. Its subcellular location is the nucleolus. Its function is as follows. Export adapter involved in nuclear export of spliced and unspliced mRNA. Plays a role in disease resistance. Mediates multiple defense responses triggered by NEP1, including stomatal closure, hypersensitive cell death (HCD) and defense-related gene expression. The polypeptide is THO complex subunit 4D (Arabidopsis thaliana (Mouse-ear cress)).